We begin with the raw amino-acid sequence, 117 residues long: DNA-binding protein MK1619 (117 aa).

The protein belongs to the PDCD5 family.

This chain is DNA-binding protein MK1619, found in Methanopyrus kandleri (strain AV19 / DSM 6324 / JCM 9639 / NBRC 100938).